The chain runs to 145 residues: MNMDFNLFMNDIVRQARQEITAAGYTELKTAEEVDEALTKKGTTLVMVNSVCGCAGGIARPAAYHSVHYDKRPDQLVTVFAGQDKEATARARDYFEGYPPSSPSFAILKDGKIMKMVERHEIEGHEPMAVVAKLQEAFEEYCEEV.

Active-site nucleophile residues include Cys52 and Cys54. Cys52 carries the post-translational modification S-bacillithiol cysteine disulfide. The CXC active site motif signature appears at 52 to 54; the sequence is CGC. Cys52 and Cys54 form a disulfide bridge.

This sequence belongs to the bacilliredoxin family. Interacts with BrxC. Post-translationally, N-terminal Cys of the CXC active site motif can react with bacillithiol (BSH) to form mixed disulfides. S-bacillithiolation protects Cys residues against overoxidation by acting as a redox switch in response to oxidative stress.

Its function is as follows. S-bacillithiolation is the formation of mixed disulfide bonds between protein thiols and the general thiol reductant bacillithiol (BSH) under oxidative stress. BSH is an equivalent of glutathione (GSH) in Firmicutes. This protein is a dithiol bacilliredoxin, which debacillithiolates (removes BSH) the S-bacillithiolated OhrR (OhrR-SSB) in vitro and in vivo NaOCl-generated S-bacillithiolated MetE (MetE-SSB). Involved in maintaining redox homeostasis in response to disulfide stress conditions. The sequence is that of Bacilliredoxin BrxB from Bacillus subtilis (strain 168).